Here is a 97-residue protein sequence, read N- to C-terminus: Co-chaperonin GroES (97 aa).

This sequence belongs to the GroES chaperonin family. Heptamer of 7 subunits arranged in a ring. Interacts with the chaperonin GroEL.

Its subcellular location is the cytoplasm. Functionally, together with the chaperonin GroEL, plays an essential role in assisting protein folding. The GroEL-GroES system forms a nano-cage that allows encapsulation of the non-native substrate proteins and provides a physical environment optimized to promote and accelerate protein folding. GroES binds to the apical surface of the GroEL ring, thereby capping the opening of the GroEL channel. The chain is Co-chaperonin GroES from Escherichia fergusonii (strain ATCC 35469 / DSM 13698 / CCUG 18766 / IAM 14443 / JCM 21226 / LMG 7866 / NBRC 102419 / NCTC 12128 / CDC 0568-73).